Here is a 366-residue protein sequence, read N- to C-terminus: Palmitoyltransferase ZDHHC2 (366 aa).

Residues 1–15 are Cytoplasmic-facing; that stretch reads MAPSGSGGVRRRCRR. The helical transmembrane segment at 16–36 threads the bilayer; the sequence is VLYWIPVVFISLLLGWSYYAY. Topologically, residues 37 to 47 are lumenal; it reads AIQLCIVSMEN. The chain crosses the membrane as a helical span at residues 48–68; sequence IGEQVVCLMAYHLLFAMFVWS. Residues 69-169 are Cytoplasmic-facing; that stretch reads YWKTIFTLPM…NNCVGFSNYK (101 aa). The region spanning 126-176 is the DHHC domain; that stretch reads RYCDRCQLIKPDRCHHCSVCDKCILKMDHHCPWVNNCVGFSNYKFFLLFLA. The active-site S-palmitoyl cysteine intermediate is the Cys156. A helical membrane pass occupies residues 170-190; it reads FFLLFLAYSLLYCLFIAATDL. Residues 191 to 207 are Lumenal-facing; it reads QYFIRFWTNGLPDTQAK. A helical transmembrane segment spans residues 208–228; the sequence is FHIMFLFFAAAMFSVSLSSLF. Residues 229–366 lie on the Cytoplasmic side of the membrane; that stretch reads GYHCWLVSKN…NPALTMENET (138 aa). Over residues 297–316 the composition is skewed to polar residues; the sequence is VNQDPEQPSTPAGLNSTVKN. Residues 297–366 are disordered; it reads VNQDPEQPST…NPALTMENET (70 aa). A mediates localization to plasma membrane and recycling endosomes region spans residues 298–366; it reads NQDPEQPSTP…NPALTMENET (69 aa). Basic and acidic residues predominate over residues 326–336; it reads PLRESQSHLLK. The Non-canonical dileucine endocytic signal motif lies at 334–335; that stretch reads LL. Over residues 337 to 347 the composition is skewed to polar residues; that stretch reads DSQTWTESSAN. The short motif at 357-360 is the NPxY-like endocytic signal element; it reads NPAL.

Belongs to the DHHC palmitoyltransferase family. In terms of assembly, monomer. Homodimer. The monomeric form has a higher catalytic activity. In terms of processing, autopalmitoylated. Expressed in all brain regions.

Its subcellular location is the postsynaptic density. It localises to the postsynaptic recycling endosome membrane. It is found in the cell membrane. The protein localises to the endoplasmic reticulum membrane. The protein resides in the golgi apparatus membrane. It carries out the reaction L-cysteinyl-[protein] + hexadecanoyl-CoA = S-hexadecanoyl-L-cysteinyl-[protein] + CoA. The catalysed reaction is L-cysteinyl-[protein] + tetradecanoyl-CoA = S-tetradecanoyl-L-cysteinyl-[protein] + CoA. The enzyme catalyses L-cysteinyl-[protein] + octadecanoyl-CoA = S-octadecanoyl-L-cysteinyl-[protein] + CoA. Its function is as follows. Palmitoyltransferase that catalyzes the addition of palmitate onto various protein substrates and is involved in a variety of cellular processes. Has no stringent fatty acid selectivity and in addition to palmitate can also transfer onto target proteins myristate from tetradecanoyl-CoA and stearate from octadecanoyl-CoA. In the nervous system, plays a role in long term synaptic potentiation by palmitoylating AKAP5 through which it regulates protein trafficking from the dendritic recycling endosomes to the plasma membrane and controls both structural and functional plasticity at excitatory synapses. In dendrites, mediates the palmitoylation of DLG4 when synaptic activity decreases and induces synaptic clustering of DLG4 and associated AMPA-type glutamate receptors. Also mediates the de novo and turnover palmitoylation of RGS7BP, a shuttle for Gi/o-specific GTPase-activating proteins/GAPs, promoting its localization to the plasma membrane in response to the activation of G protein-coupled receptors. Through the localization of these GTPase-activating proteins/GAPs, it also probably plays a role in G protein-coupled receptors signaling in neurons. Also probably plays a role in cell adhesion by palmitoylating CD9 and CD151 to regulate their expression and function. Palmitoylates the endoplasmic reticulum protein CKAP4 and regulates its localization to the plasma membrane. Could also palmitoylate LCK and regulate its localization to the plasma membrane. In Mus musculus (Mouse), this protein is Palmitoyltransferase ZDHHC2.